Here is a 404-residue protein sequence, read N- to C-terminus: Formate-dependent phosphoribosylglycinamide formyltransferase (404 aa).

N(1)-(5-phospho-beta-D-ribosyl)glycinamide is bound by residues E25 to L26 and E85. ATP-binding positions include R118, K159, S164–Q169, E199–I202, and E207. An ATP-grasp domain is found at R123–L318. Residues E277 and E289 each contribute to the Mg(2+) site. Residues D296, K365, and R372–R373 contribute to the N(1)-(5-phospho-beta-D-ribosyl)glycinamide site.

It belongs to the PurK/PurT family. As to quaternary structure, homodimer.

The catalysed reaction is N(1)-(5-phospho-beta-D-ribosyl)glycinamide + formate + ATP = N(2)-formyl-N(1)-(5-phospho-beta-D-ribosyl)glycinamide + ADP + phosphate + H(+). It functions in the pathway purine metabolism; IMP biosynthesis via de novo pathway; N(2)-formyl-N(1)-(5-phospho-D-ribosyl)glycinamide from N(1)-(5-phospho-D-ribosyl)glycinamide (formate route): step 1/1. Functionally, involved in the de novo purine biosynthesis. Catalyzes the transfer of formate to 5-phospho-ribosyl-glycinamide (GAR), producing 5-phospho-ribosyl-N-formylglycinamide (FGAR). Formate is provided by PurU via hydrolysis of 10-formyl-tetrahydrofolate. The sequence is that of Formate-dependent phosphoribosylglycinamide formyltransferase from Burkholderia pseudomallei (strain 668).